The following is a 406-amino-acid chain: Angiopoietin-related protein 4 (406 aa).

The signal sequence occupies residues 1-25 (MSGAPTAGAALMLCAATAVLLSAQG). Residues 100–143 (EVLHSLQTQLKAQNSRIQQLFHKVAQQQRHLEKQHLRIQHLQSQ) adopt a coiled-coil conformation. Residue Asn-177 is glycosylated (N-linked (GlcNAc...) asparagine). The region spanning 179 to 401 (SRLHRLPRDC…ATTMLIQPMA (223 aa)) is the Fibrinogen C-terminal domain. 2 cysteine pairs are disulfide-bonded: Cys-188–Cys-216 and Cys-341–Cys-354.

As to quaternary structure, homooligomer; disulfide-linked via Cys residues in the N-terminal part of the protein. The homooligomer undergoes proteolytic processing to release the ANGPTL4 C-terminal chain, which circulates as a monomer. The homooligomer unprocessed form is able to interact with the extracellular matrix. In terms of processing, N-glycosylated. Forms disulfide-linked dimers and tetramers. Post-translationally, cleaved into a smaller N-terminal chain and a larger chain that contains the fibrinogen C-terminal domain; both cleaved and uncleaved forms are detected in the extracellular space. The cleaved form is not present within the cell. Detected in blood plasma (at protein level). Detected in liver. Detected in white fat tissue and placenta. Expressed at high levels in the placenta, heart, liver, muscle, pancreas and lung but expressed poorly in the brain and kidney.

It localises to the secreted. The protein resides in the extracellular space. The protein localises to the extracellular matrix. Its function is as follows. Mediates inactivation of the lipoprotein lipase LPL, and thereby plays a role in the regulation of triglyceride clearance from the blood serum and in lipid metabolism. May also play a role in regulating glucose homeostasis and insulin sensitivity. Inhibits proliferation, migration, and tubule formation of endothelial cells and reduces vascular leakage. Upon heterologous expression, inhibits the adhesion of endothelial cell to the extracellular matrix (ECM), and inhibits the reorganization of the actin cytoskeleton, formation of actin stress fibers and focal adhesions in endothelial cells that have adhered to ANGPTL4-containing ECM (in vitro). Depending on context, may modulate tumor-related angiogenesis. Mediates inactivation of the lipoprotein lipase LPL, and thereby plays an important role in the regulation of triglyceride clearance from the blood serum and in lipid metabolism. Has higher activity in LPL inactivation than the uncleaved protein. The protein is Angiopoietin-related protein 4 (ANGPTL4) of Homo sapiens (Human).